We begin with the raw amino-acid sequence, 263 residues long: MSLVAEAFVSQIAAAEPWPENATLYQQLKGEQILLSDNAASLAVQAFLQMCNLPIKVVCRANAEYMSPSGKVPFIHVGNQVVSELGPIVQFVKAKGHSLSDGLEEVQKAEMKAYMELVNNMLLTAELYLQWCDEATVGEITHARYGSPYPWPLNHILAYQKQWEVKRKMKAIGWGKKTLDQVLEDVDQCCQALSQRLGTQPYFFNKQPTELDALVFGHLYTILTTQLTNDELSEKVKNYSNLLAFCRRIEQHYFEDRGKGRLS.

Ser-2 carries the N-acetylserine modification.

Belongs to the metaxin family. Interacts with MTX1/metaxin-1. Associates with the mitochondrial contact site and cristae organizing system (MICOS) complex, composed of at least MICOS10/MIC10, CHCHD3/MIC19, CHCHD6/MIC25, APOOL/MIC27, IMMT/MIC60, APOO/MIC23/MIC26 and QIL1/MIC13. This complex was also known under the names MINOS or MitOS complex. The MICOS complex associates with mitochondrial outer membrane proteins SAMM50, MTX1 and MTX2 (together described as components of the mitochondrial outer membrane sorting assembly machinery (SAM) complex) and DNAJC11, mitochondrial inner membrane protein TMEM11 and with HSPA9. The MICOS and SAM complexes together with DNAJC11 are part of a large protein complex spanning both membranes termed the mitochondrial intermembrane space bridging (MIB) complex.

The protein resides in the mitochondrion outer membrane. The protein localises to the mitochondrion. In terms of biological role, involved in transport of proteins into the mitochondrion. The polypeptide is Metaxin-2 (MTX2) (Homo sapiens (Human)).